The sequence spans 31 residues: Chassatide C5 (31 aa).

Residues 1–31 (GVIPCGESCVFIPCISSVVGCSCKNKVCYRN) constitute a cross-link (cyclopeptide (Gly-Asn)). 3 cysteine pairs are disulfide-bonded: C5/C21, C9/C23, and C14/C28.

This is a cyclic peptide. Expressed in pedicel, root and stem but not in leaf and fruit (at protein level).

In terms of biological role, probably participates in a plant defense mechanism. This chain is Chassatide C5, found in Chassalia chartacea (Chassalia curviflora).